The primary structure comprises 194 residues: 21 kDa hemolysin (194 aa).

The first 19 residues, Met-1–Ala-19, serve as a signal peptide directing secretion. 2 consecutive BON domains span residues Asp-49–Glu-118 and Ile-127–Gln-194.

Its subcellular location is the periplasm. The protein is 21 kDa hemolysin (hly) of Actinobacillus pleuropneumoniae (Haemophilus pleuropneumoniae).